A 233-amino-acid chain; its full sequence is Large ribosomal subunit protein uL2 (233 aa).

The interval 195–233 (PHGGGNHQHVGRPSTVGRNAPPGRKVGRLSPKRRRVNGR) is disordered. Positions 219-233 (KVGRLSPKRRRVNGR) are enriched in basic residues.

This sequence belongs to the universal ribosomal protein uL2 family. Part of the 50S ribosomal subunit. Forms a bridge to the 30S subunit in the 70S ribosome.

Functionally, one of the primary rRNA binding proteins. Required for association of the 30S and 50S subunits to form the 70S ribosome, for tRNA binding and peptide bond formation. It has been suggested to have peptidyltransferase activity; this is somewhat controversial. Makes several contacts with the 16S rRNA in the 70S ribosome. This Thermoplasma acidophilum (strain ATCC 25905 / DSM 1728 / JCM 9062 / NBRC 15155 / AMRC-C165) protein is Large ribosomal subunit protein uL2.